Reading from the N-terminus, the 322-residue chain is ATP-dependent 6-phosphofructokinase (322 aa).

ATP is bound by residues glycine 12, 73 to 74, and 103 to 106; these read RF and GDGT. Aspartate 104 serves as a coordination point for Mg(2+). 126–128 provides a ligand contact to substrate; the sequence is TID. The active-site Proton acceptor is aspartate 128. Residue arginine 155 participates in ADP binding. Residues arginine 163 and 170–172 each bind substrate; that span reads MGR. Residues 186–188, lysine 212, and 214–216 each bind ADP; these read GSE and KPS. Residues glutamate 223, arginine 245, and 251 to 254 contribute to the substrate site; that span reads HTQR.

The protein belongs to the phosphofructokinase type A (PFKA) family. ATP-dependent PFK group I subfamily. Prokaryotic clade 'B1' sub-subfamily. Homotetramer. Requires Mg(2+) as cofactor.

The protein resides in the cytoplasm. It catalyses the reaction beta-D-fructose 6-phosphate + ATP = beta-D-fructose 1,6-bisphosphate + ADP + H(+). It functions in the pathway carbohydrate degradation; glycolysis; D-glyceraldehyde 3-phosphate and glycerone phosphate from D-glucose: step 3/4. Its activity is regulated as follows. Allosterically activated by ADP and other diphosphonucleosides, and allosterically inhibited by phosphoenolpyruvate. In terms of biological role, catalyzes the phosphorylation of D-fructose 6-phosphate to fructose 1,6-bisphosphate by ATP, the first committing step of glycolysis. In Mesomycoplasma hyopneumoniae (strain J / ATCC 25934 / NCTC 10110) (Mycoplasma hyopneumoniae), this protein is ATP-dependent 6-phosphofructokinase.